The chain runs to 128 residues: Cytochrome c oxidase subunit 5B, mitochondrial (128 aa).

The N-terminal 30 residues, 1–30 (MASRLLRGVGALAAQALRRTARGAAVTRSM), are a transit peptide targeting the mitochondrion. An N6-acetyllysine mark is found at lysine 67 and lysine 85. The Zn(2+) site is built by cysteine 90, cysteine 92, cysteine 112, and cysteine 115. An N6-acetyllysine modification is found at lysine 120.

It belongs to the cytochrome c oxidase subunit 5B family. As to quaternary structure, component of the cytochrome c oxidase (complex IV, CIV), a multisubunit enzyme composed of 14 subunits. The complex is composed of a catalytic core of 3 subunits MT-CO1, MT-CO2 and MT-CO3, encoded in the mitochondrial DNA, and 11 supernumerary subunits COX4I, COX5A, COX5B, COX6A, COX6B, COX6C, COX7A, COX7B, COX7C, COX8 and NDUFA4, which are encoded in the nuclear genome. The complex exists as a monomer or a dimer and forms supercomplexes (SCs) in the inner mitochondrial membrane with NADH-ubiquinone oxidoreductase (complex I, CI) and ubiquinol-cytochrome c oxidoreductase (cytochrome b-c1 complex, complex III, CIII), resulting in different assemblies (supercomplex SCI(1)III(2)IV(1) and megacomplex MCI(2)III(2)IV(2)).

The protein resides in the mitochondrion inner membrane. The protein operates within energy metabolism; oxidative phosphorylation. Functionally, component of the cytochrome c oxidase, the last enzyme in the mitochondrial electron transport chain which drives oxidative phosphorylation. The respiratory chain contains 3 multisubunit complexes succinate dehydrogenase (complex II, CII), ubiquinol-cytochrome c oxidoreductase (cytochrome b-c1 complex, complex III, CIII) and cytochrome c oxidase (complex IV, CIV), that cooperate to transfer electrons derived from NADH and succinate to molecular oxygen, creating an electrochemical gradient over the inner membrane that drives transmembrane transport and the ATP synthase. Cytochrome c oxidase is the component of the respiratory chain that catalyzes the reduction of oxygen to water. Electrons originating from reduced cytochrome c in the intermembrane space (IMS) are transferred via the dinuclear copper A center (CU(A)) of subunit 2 and heme A of subunit 1 to the active site in subunit 1, a binuclear center (BNC) formed by heme A3 and copper B (CU(B)). The BNC reduces molecular oxygen to 2 water molecules using 4 electrons from cytochrome c in the IMS and 4 protons from the mitochondrial matrix. This Mus musculus (Mouse) protein is Cytochrome c oxidase subunit 5B, mitochondrial (Cox5b).